Consider the following 261-residue polypeptide: tRNA pseudouridine synthase A (261 aa).

D51 acts as the Nucleophile in catalysis. Y109 provides a ligand contact to substrate.

It belongs to the tRNA pseudouridine synthase TruA family. As to quaternary structure, homodimer.

The enzyme catalyses uridine(38/39/40) in tRNA = pseudouridine(38/39/40) in tRNA. Formation of pseudouridine at positions 38, 39 and 40 in the anticodon stem and loop of transfer RNAs. The polypeptide is tRNA pseudouridine synthase A (Shewanella sp. (strain ANA-3)).